Consider the following 512-residue polypeptide: 2-isopropylmalate synthase (512 aa).

The Pyruvate carboxyltransferase domain maps to 4 to 266; sequence IEIFDTTLRD…TTKLNLKEIA (263 aa). Mn(2+) contacts are provided by D13, H201, H203, and N237. The interval 390 to 512 is regulatory domain; that stretch reads QLESVQLAYG…GEPTPVSATI (123 aa).

This sequence belongs to the alpha-IPM synthase/homocitrate synthase family. LeuA type 1 subfamily. Homodimer. Mn(2+) is required as a cofactor.

It localises to the cytoplasm. The catalysed reaction is 3-methyl-2-oxobutanoate + acetyl-CoA + H2O = (2S)-2-isopropylmalate + CoA + H(+). The protein operates within amino-acid biosynthesis; L-leucine biosynthesis; L-leucine from 3-methyl-2-oxobutanoate: step 1/4. Functionally, catalyzes the condensation of the acetyl group of acetyl-CoA with 3-methyl-2-oxobutanoate (2-ketoisovalerate) to form 3-carboxy-3-hydroxy-4-methylpentanoate (2-isopropylmalate). In Brevibacillus brevis (strain 47 / JCM 6285 / NBRC 100599), this protein is 2-isopropylmalate synthase.